The sequence spans 492 residues: Ribulose bisphosphate carboxylase large chain (492 aa).

Substrate is bound by residues Asn131 and Thr181. Lys183 functions as the Proton acceptor in the catalytic mechanism. Residue Lys185 coordinates substrate. Residues Lys209, Asp211, and Glu212 each coordinate Mg(2+). At Lys209 the chain carries N6-carboxylysine. His301 serves as the catalytic Proton acceptor. Substrate contacts are provided by Arg302, His334, and Ser386.

The protein belongs to the RuBisCO large chain family. Type I subfamily. In terms of assembly, heterohexadecamer of 8 large chains and 8 small chains. Mg(2+) serves as cofactor.

It carries out the reaction 2 (2R)-3-phosphoglycerate + 2 H(+) = D-ribulose 1,5-bisphosphate + CO2 + H2O. The catalysed reaction is D-ribulose 1,5-bisphosphate + O2 = 2-phosphoglycolate + (2R)-3-phosphoglycerate + 2 H(+). Its function is as follows. RuBisCO catalyzes two reactions: the carboxylation of D-ribulose 1,5-bisphosphate, the primary event in carbon dioxide fixation, as well as the oxidative fragmentation of the pentose substrate. Both reactions occur simultaneously and in competition at the same active site. This is Ribulose bisphosphate carboxylase large chain from Nitrosococcus oceani (strain ATCC 19707 / BCRC 17464 / JCM 30415 / NCIMB 11848 / C-107).